Reading from the N-terminus, the 179-residue chain is Acireductone dioxygenase (179 aa).

Acidic residues predominate over residues 1-12; that stretch reads MVEAWYMDDSEE. Residues 1-21 form a disordered region; sequence MVEAWYMDDSEEDQRRPHRLE. Fe(2+) contacts are provided by H88, H90, E94, and H133. 4 residues coordinate Ni(2+): H88, H90, E94, and H133.

This sequence belongs to the acireductone dioxygenase (ARD) family. In terms of assembly, monomer. Interacts with MMP14. Fe(2+) is required as a cofactor. Ni(2+) serves as cofactor.

Its subcellular location is the cytoplasm. The protein resides in the nucleus. The protein localises to the cell membrane. It carries out the reaction 1,2-dihydroxy-5-(methylsulfanyl)pent-1-en-3-one + O2 = 4-methylsulfanyl-2-oxobutanoate + formate + 2 H(+). The enzyme catalyses 1,2-dihydroxy-5-(methylsulfanyl)pent-1-en-3-one + O2 = 3-(methylsulfanyl)propanoate + CO + formate + 2 H(+). It functions in the pathway amino-acid biosynthesis; L-methionine biosynthesis via salvage pathway; L-methionine from S-methyl-5-thio-alpha-D-ribose 1-phosphate: step 5/6. Catalyzes 2 different reactions between oxygen and the acireductone 1,2-dihydroxy-3-keto-5-methylthiopentene (DHK-MTPene) depending upon the metal bound in the active site. Fe-containing acireductone dioxygenase (Fe-ARD) produces formate and 2-keto-4-methylthiobutyrate (KMTB), the alpha-ketoacid precursor of methionine in the methionine recycle pathway. Ni-containing acireductone dioxygenase (Ni-ARD) produces methylthiopropionate, carbon monoxide and formate, and does not lie on the methionine recycle pathway. Also down-regulates cell migration mediated by MMP14. This is Acireductone dioxygenase from Monodelphis domestica (Gray short-tailed opossum).